A 270-amino-acid polypeptide reads, in one-letter code: Transmembrane protein 176B (270 aa).

Helical transmembrane passes span 65-85 (LALG…GVCL), 95-115 (ASGC…GAIV), 127-147 (VSSL…VLCV), and 209-229 (LFLA…GVGL). Phosphoserine is present on residues Ser236, Ser245, Ser254, and Ser258. Residues 237–270 (SQPLNEEGSEKRLLGENSVPPSPSREQTSTAIVL) are disordered. The segment covering 260–270 (SREQTSTAIVL) has biased composition (polar residues).

This sequence belongs to the TMEM176 family.

Its subcellular location is the nucleus membrane. Functionally, may play a role in the process of maturation of dendritic cells. Required for the development of cerebellar granule cells. The protein is Transmembrane protein 176B (TMEM176B) of Pongo abelii (Sumatran orangutan).